Reading from the N-terminus, the 409-residue chain is DNA primase DnaG (409 aa).

Positions 175 to 261 (DAIIVVEGRA…EVEELTRKEI (87 aa)) constitute a Toprim domain. Residues E181, D223, and D225 each contribute to the Mg(2+) site. Basic and acidic residues predominate over residues 280-289 (ERPKDKEREK). Residues 280 to 322 (ERPKDKEREKGKKPKPKKRPERRGRPRKKKARPKRGPQERRLL) are disordered. Residues 290 to 314 (GKKPKPKKRPERRGRPRKKKARPKR) are compositionally biased toward basic residues.

The protein belongs to the archaeal DnaG primase family. In terms of assembly, forms a ternary complex with MCM helicase and DNA. Component of the archaeal exosome complex. Requires Mg(2+) as cofactor.

It carries out the reaction ssDNA + n NTP = ssDNA/pppN(pN)n-1 hybrid + (n-1) diphosphate.. RNA polymerase that catalyzes the synthesis of short RNA molecules used as primers for DNA polymerase during DNA replication. Also part of the exosome, which is a complex involved in RNA degradation. Acts as a poly(A)-binding protein that enhances the interaction between heteromeric, adenine-rich transcripts and the exosome. The chain is DNA primase DnaG from Methanopyrus kandleri (strain AV19 / DSM 6324 / JCM 9639 / NBRC 100938).